Here is a 247-residue protein sequence, read N- to C-terminus: uncharacterized protein (247 aa).

The N-acetyltransferase domain occupies 70–205 (ISLWMGPGNN…QKVPLEIMIR (136 aa)).

This sequence belongs to the acetyltransferase family.

Its subcellular location is the endoplasmic reticulum. It is found in the golgi apparatus. The protein localises to the vacuole. This is an uncharacterized protein from Schizosaccharomyces pombe (strain 972 / ATCC 24843) (Fission yeast).